Here is a 147-residue protein sequence, read N- to C-terminus: Cell division protein SepF 1 (147 aa).

It belongs to the SepF family. As to quaternary structure, homodimer. Interacts with FtsZ.

It localises to the cytoplasm. In terms of biological role, cell division protein that is part of the divisome complex and is recruited early to the Z-ring. Probably stimulates Z-ring formation, perhaps through the cross-linking of FtsZ protofilaments. Its function overlaps with FtsA. This chain is Cell division protein SepF 1, found in Desulforamulus reducens (strain ATCC BAA-1160 / DSM 100696 / MI-1) (Desulfotomaculum reducens).